We begin with the raw amino-acid sequence, 104 residues long: Alpha-amylase inhibitor HOE-467A (104 aa).

A signal peptide spans 1 to 30 (MRVRALRLAALVGAGAALALSPLAAGPASA). 2 cysteine pairs are disulfide-bonded: cysteine 41–cysteine 57 and cysteine 75–cysteine 103.

Inhibits mammalian alpha-amylases specifically but has no action on plant and microbial alpha-amylases. Forms a tight stoichiometric 1:1 complex with alpha-amylase. This chain is Alpha-amylase inhibitor HOE-467A, found in Streptomyces tendae.